A 149-amino-acid chain; its full sequence is Azurin (149 aa).

A signal peptide spans 1 to 20; it reads MLAKATLAIVLSAASLPVLA. The 129-residue stretch at 21–149 folds into the Plastocyanin-like domain; sequence AQCEATIESN…MMKGTLKLSN (129 aa). A disulfide bridge links Cys-23 with Cys-46. Positions 66, 132, 137, and 141 each coordinate Cu cation.

The protein localises to the periplasm. Transfers electrons from cytochrome c551 to cytochrome oxidase. This is Azurin (azu) from Achromobacter denitrificans (Alcaligenes denitrificans).